The following is a 150-amino-acid chain: Large ribosomal subunit protein bL9 (150 aa).

This sequence belongs to the bacterial ribosomal protein bL9 family.

Functionally, binds to the 23S rRNA. The protein is Large ribosomal subunit protein bL9 of Pediococcus pentosaceus (strain ATCC 25745 / CCUG 21536 / LMG 10740 / 183-1w).